The sequence spans 356 residues: tRNA-specific 2-thiouridylase MnmA (356 aa).

ATP-binding positions include 6–13 and Leu32; that span reads AMSGGVDS. Cys101 functions as the Nucleophile in the catalytic mechanism. A disulfide bond links Cys101 and Cys193. ATP is bound at residue Gly125. The tract at residues 143-145 is interaction with tRNA; the sequence is KDQ. Cys193 serves as the catalytic Cysteine persulfide intermediate.

The protein belongs to the MnmA/TRMU family.

Its subcellular location is the cytoplasm. The enzyme catalyses S-sulfanyl-L-cysteinyl-[protein] + uridine(34) in tRNA + AH2 + ATP = 2-thiouridine(34) in tRNA + L-cysteinyl-[protein] + A + AMP + diphosphate + H(+). Functionally, catalyzes the 2-thiolation of uridine at the wobble position (U34) of tRNA, leading to the formation of s(2)U34. The protein is tRNA-specific 2-thiouridylase MnmA of Mycolicibacterium smegmatis (strain ATCC 700084 / mc(2)155) (Mycobacterium smegmatis).